Here is a 236-residue protein sequence, read N- to C-terminus: Small ribosomal subunit protein uS2c (236 aa).

The protein belongs to the universal ribosomal protein uS2 family.

The protein resides in the plastid. The protein localises to the chloroplast. The sequence is that of Small ribosomal subunit protein uS2c (rps2) from Oenothera biennis (German evening primrose).